The following is a 278-amino-acid chain: MVRWPGLRPCLSAILNPAGASNMAAAEVPGYLVSPQTEKHRRARNWTDAEMRGLMLVWEEFFDELKQTKRNAKVYEKMASKLFEMTGERRLGEEIKIKITNMTFQYRKLKCMTDSESIPPDWPYYLAIDRILAKVPESCEGKLPDGQQPGPSTSQTEASLSPSAKSTPLYLPYTQCSYEGHFEDDRSDSSSSLLSLKFRSEERPVKKRKMRSCHLQKKKLRLLEAMLEEQRRLSRAMEETCREVRRVLDQQNILQVQSLQLQERMMSLLEKIIAKSNV.

The 88-residue stretch at 44-131 (RNWTDAEMRG…WPYYLAIDRI (88 aa)) folds into the Myb-like domain. Residues 139–167 (CEGKLPDGQQPGPSTSQTEASLSPSAKST) are disordered. Residues 149–166 (PGPSTSQTEASLSPSAKS) are compositionally biased toward polar residues.

The protein is Myb/SANT-like DNA-binding domain-containing protein 1 (Msantd1) of Mus musculus (Mouse).